The primary structure comprises 77 residues: Acyl carrier protein (77 aa).

Residues alanine 2 to leucine 77 enclose the Carrier domain. An O-(pantetheine 4'-phosphoryl)serine modification is found at serine 37.

This sequence belongs to the acyl carrier protein (ACP) family. In terms of processing, 4'-phosphopantetheine is transferred from CoA to a specific serine of apo-ACP by AcpS. This modification is essential for activity because fatty acids are bound in thioester linkage to the sulfhydryl of the prosthetic group.

It is found in the cytoplasm. It participates in lipid metabolism; fatty acid biosynthesis. In terms of biological role, carrier of the growing fatty acid chain in fatty acid biosynthesis. The sequence is that of Acyl carrier protein from Bacillus anthracis (strain A0248).